Consider the following 78-residue polypeptide: Conotoxin 6 (78 aa).

The signal sequence occupies residues 1–22 (MKLTCMMIVAVLFLTAWIFITA). Residues 23-51 (DNSRNGIENLPRMRRHEMKNPKASKLNKR) constitute a propeptide that is removed on maturation. Cystine bridges form between Cys53/Cys69, Cys60/Cys73, and Cys68/Cys77.

The protein belongs to the conotoxin O1 superfamily. As to expression, expressed by the venom duct.

The protein localises to the secreted. The polypeptide is Conotoxin 6 (Conus imperialis (Imperial cone)).